The following is a 2032-amino-acid chain: Cytoskeleton-associated protein 5 (2032 aa).

TOG regions lie at residues 1–223, 268–502, and 588–817; these read MGDD…KLPT, YELL…LVHG, and SIEV…GQSP. At Lys48 the chain carries N6-acetyllysine. HEAT repeat units lie at residues 159-197, 356-394, and 434-472; these read IISL…WNRD, GQYA…TTTL, and KSLL…VVGE. Residues 501–579 are disordered; the sequence is HGKKSGLATE…GTKNKKGLET (79 aa). An HEAT 4 repeat occupies 750 to 788; it reads ELNVKAFISNVKTALAATNPAVRTSAITLLGVMYLYVGP. A disordered region spans residues 811–848; the sequence is KMQGQSPPAPTRGIAKHSTSATDEGEDGEEPGEGGNDV. Ser816 carries the phosphoserine modification. A compositionally biased stretch (acidic residues) spans 833–842; sequence DEGEDGEEPG. TOG regions lie at residues 853–1081 and 1193–1428; these read PRIE…ANMP and IEQL…KRPS. 3 HEAT repeats span residues 855 to 893, 936 to 974, and 1013 to 1051; these read IEIS…EAKF, RQHV…QTGM, and PTDL…HLGY. Positions 1078–1095 are enriched in low complexity; it reads ANMPSKPAAPAKAMSKPM. A disordered region spans residues 1078-1156; the sequence is ANMPSKPAAP…KTTLKEDDDK (79 aa). HEAT repeat units follow at residues 1284–1322, 1324–1357, and 1361–1399; these read ENEA…VYPA, KMFP…SYGM, and QPTP…VHGD. Positions 1420-1459 are disordered; the sequence is IKRSAKRPSAAPVKQAEEKPQRTQNINSNANMLRKGPAED. A compositionally biased stretch (polar residues) spans 1441-1450; that stretch reads RTQNINSNAN. Ser1469 bears the Phosphoserine mark. Residues 1801 to 1822 form a disordered region; that stretch reads SMDQTGSKSDKETEKGASRIDE. Residues 1808–1822 show a composition bias toward basic and acidic residues; it reads KSDKETEKGASRIDE. Ser1861 is modified (phosphoserine). 2 disordered regions span residues 1893-1926 and 1948-2032; these read SKGR…GNTN and LDNT…SSRK. Over residues 1909-1921 the composition is skewed to low complexity; it reads VTCVPTPTSTVSS. Residues 1932 to 1957 form an interaction with TACC3 region; that stretch reads PSVYLERLKILRQRCGLDNTKQDDRP. The span at 1972-1983 shows a compositional bias: polar residues; it reads ASSTDMLHSKLS. Residues 1984–1997 show a composition bias toward basic and acidic residues; the sequence is QLRESREQHQHSDL. The span at 2002–2015 shows a compositional bias: low complexity; that stretch reads THSAGTMTSSSSTT. Basic and acidic residues predominate over residues 2018–2032; that stretch reads DDLKKRLERIKSSRK.

This sequence belongs to the TOG/XMAP215 family. Interacts with TACC1. Interacts with HNRNPA2B1. Interacts with TACC3 independently of clathrin. Interacts with TACC3 and clathrin forming the TACC3/ch-TOG/clathrin complex located at spindle inter-microtubules bridges. Interacts with NDC80; indicative for an association with the NDC80 complex. Interacts with SLAIN2. Interacts with SLAIN1.

Its subcellular location is the cytoplasm. It localises to the cytoskeleton. It is found in the microtubule organizing center. The protein resides in the centrosome. The protein localises to the spindle pole. Its subcellular location is the spindle. It localises to the chromosome. It is found in the centromere. The protein resides in the kinetochore. Binds to the plus end of microtubules and regulates microtubule dynamics and microtubule organization. Acts as a processive microtubule polymerase. Promotes cytoplasmic microtubule nucleation and elongation. Plays a major role in organizing spindle poles. In spindle formation protects kinetochore microtubules from depolymerization by KIF2C and has an essential role in centrosomal microtubule assembly independently of KIF2C activity. Contributes to centrosome integrity. Acts as a component of the TACC3/ch-TOG/clathrin complex proposed to contribute to stabilization of kinetochore fibers of the mitotic spindle by acting as inter-microtubule bridge. The TACC3/ch-TOG/clathrin complex is required for the maintenance of kinetochore fiber tension. Enhances the strength of NDC80 complex-mediated kinetochore-tip microtubule attachments. This chain is Cytoskeleton-associated protein 5, found in Mus musculus (Mouse).